The chain runs to 445 residues: DNA repair protein RadA (445 aa).

The C4-type zinc-finger motif lies at 10 to 27 (CSNCANISHKWSGQCFDC). 90–97 (GEPGIGKS) lines the ATP pocket. A RadA KNRFG motif motif is present at residues 249–253 (KNRFG). Positions 348–445 (EIYLSIAGGL…HLQDLKEIIK (98 aa)) are lon-protease-like.

Belongs to the RecA family. RadA subfamily.

Functionally, DNA-dependent ATPase involved in processing of recombination intermediates, plays a role in repairing DNA breaks. Stimulates the branch migration of RecA-mediated strand transfer reactions, allowing the 3' invading strand to extend heteroduplex DNA faster. Binds ssDNA in the presence of ADP but not other nucleotides, has ATPase activity that is stimulated by ssDNA and various branched DNA structures, but inhibited by SSB. Does not have RecA's homology-searching function. This is DNA repair protein RadA from Rickettsia typhi (strain ATCC VR-144 / Wilmington).